The following is an 82-amino-acid chain: Large ribosomal subunit protein uL23 (82 aa).

This sequence belongs to the universal ribosomal protein uL23 family. Part of the 50S ribosomal subunit. Contacts protein L29.

Binds to 23S rRNA. One of the proteins that surrounds the polypeptide exit tunnel on the outside of the ribosome. The chain is Large ribosomal subunit protein uL23 from Methanosarcina acetivorans (strain ATCC 35395 / DSM 2834 / JCM 12185 / C2A).